The sequence spans 460 residues: 3-isopropylmalate dehydratase large subunit (460 aa).

[4Fe-4S] cluster-binding residues include C338, C398, and C401.

It belongs to the aconitase/IPM isomerase family. LeuC type 1 subfamily. As to quaternary structure, heterodimer of LeuC and LeuD. Requires [4Fe-4S] cluster as cofactor.

The enzyme catalyses (2R,3S)-3-isopropylmalate = (2S)-2-isopropylmalate. Its pathway is amino-acid biosynthesis; L-leucine biosynthesis; L-leucine from 3-methyl-2-oxobutanoate: step 2/4. In terms of biological role, catalyzes the isomerization between 2-isopropylmalate and 3-isopropylmalate, via the formation of 2-isopropylmaleate. This chain is 3-isopropylmalate dehydratase large subunit, found in Streptococcus thermophilus (strain CNRZ 1066).